Reading from the N-terminus, the 444-residue chain is Argininosuccinate synthase (444 aa).

ATP-binding positions include 18-26 (AFSGGLDTS) and Ala44. Position 100 (Tyr100) interacts with L-citrulline. ATP-binding residues include Gly130 and Thr132. L-aspartate is bound by residues Thr132, Asn136, and Asp137. Asn136 serves as a coordination point for L-citrulline. Asp137 provides a ligand contact to ATP. L-citrulline is bound by residues Arg140 and Ser193. Asp195 serves as a coordination point for ATP. 3 residues coordinate L-citrulline: Thr202, Glu204, and Glu281.

Belongs to the argininosuccinate synthase family. Type 2 subfamily. Homotetramer.

It localises to the cytoplasm. It carries out the reaction L-citrulline + L-aspartate + ATP = 2-(N(omega)-L-arginino)succinate + AMP + diphosphate + H(+). The protein operates within amino-acid biosynthesis; L-arginine biosynthesis; L-arginine from L-ornithine and carbamoyl phosphate: step 2/3. This chain is Argininosuccinate synthase, found in Mannheimia succiniciproducens (strain KCTC 0769BP / MBEL55E).